Consider the following 300-residue polypeptide: Cation-efflux pump FieF (300 aa).

The next 4 membrane-spanning stretches (helical) occupy residues 12–32 (AAIA…FAWW), 39–59 (ILAA…NLLV), 82–102 (AALA…LTSI), and 114–134 (PGVG…LVTF). 2 residues coordinate Zn(2+): Asp-45 and Asp-49. Residues His-153 and Asp-157 each coordinate Zn(2+). 2 consecutive transmembrane segments (helical) span residues 156–176 (SDVM…YGWH) and 178–198 (ADAL…LRMG).

Belongs to the cation diffusion facilitator (CDF) transporter (TC 2.A.4) family. FieF subfamily. As to quaternary structure, homodimer.

The protein resides in the cell inner membrane. The catalysed reaction is Zn(2+)(in) + H(+)(out) = Zn(2+)(out) + H(+)(in). The enzyme catalyses Cd(2+)(in) + H(+)(out) = Cd(2+)(out) + H(+)(in). It carries out the reaction Fe(2+)(in) + H(+)(out) = Fe(2+)(out) + H(+)(in). Its function is as follows. Divalent metal cation transporter which exports Zn(2+), Cd(2+) and possibly Fe(2+). May be involved in zinc and iron detoxification by efflux. The sequence is that of Cation-efflux pump FieF from Salmonella arizonae (strain ATCC BAA-731 / CDC346-86 / RSK2980).